Reading from the N-terminus, the 412-residue chain is COP9 signalosome complex subunit 4 (412 aa).

One can recognise a PCI domain in the interval 216 to 378; it reads EAAQRYYELS…GILHFEDSNP (163 aa).

This sequence belongs to the CSN4 family. In terms of assembly, component of the CSN complex, probably composed of csn-1, csn-2, csn-3, csn-4, csn-5, csn-6 and csn-7. Within the complex it probably interacts directly with csn-2 and csn-4. In the complex, it probably interacts directly with csn-1, csn-2, csn-3 and csn-6. Interacts with itself.

It localises to the cytoplasm. The protein localises to the nucleus. In terms of biological role, component of the COP9 signalosome complex (CSN), a complex involved in various cellular and developmental processes. The CSN complex is an essential regulator of the ubiquitin (Ubl) conjugation pathway by mediating the deneddylation of the cullin subunits of the SCF-type E3 ligase complexes, leading to decrease the Ubl ligase activity of SCF. The CSN complex plays an essential role in embryogenesis and oogenesis and is required to regulate microtubule stability in the early embryo. Mediates mei-3/katanin targeting for degradation at the meiosis to mitosis transition via deneddylation of cul-3. The sequence is that of COP9 signalosome complex subunit 4 (csn-4) from Caenorhabditis elegans.